Here is a 62-residue protein sequence, read N- to C-terminus: MAVPARHTSKQKKRSRRGHIKLSVPAMHYDATTGEYRLSHRVSPKGYYKGRQVVNNNDNGNN.

The disordered stretch occupies residues 1 to 20 (MAVPARHTSKQKKRSRRGHI). Over residues 7–20 (HTSKQKKRSRRGHI) the composition is skewed to basic residues.

This sequence belongs to the bacterial ribosomal protein bL32 family.

The protein is Large ribosomal subunit protein bL32 of Lactobacillus acidophilus (strain ATCC 700396 / NCK56 / N2 / NCFM).